The primary structure comprises 258 residues: Acyl-[acyl-carrier-protein]--UDP-N-acetylglucosamine O-acyltransferase (258 aa).

This sequence belongs to the transferase hexapeptide repeat family. LpxA subfamily. In terms of assembly, homotrimer.

The protein localises to the cytoplasm. The enzyme catalyses a (3R)-hydroxyacyl-[ACP] + UDP-N-acetyl-alpha-D-glucosamine = a UDP-3-O-[(3R)-3-hydroxyacyl]-N-acetyl-alpha-D-glucosamine + holo-[ACP]. The protein operates within glycolipid biosynthesis; lipid IV(A) biosynthesis; lipid IV(A) from (3R)-3-hydroxytetradecanoyl-[acyl-carrier-protein] and UDP-N-acetyl-alpha-D-glucosamine: step 1/6. In terms of biological role, involved in the biosynthesis of lipid A, a phosphorylated glycolipid that anchors the lipopolysaccharide to the outer membrane of the cell. The protein is Acyl-[acyl-carrier-protein]--UDP-N-acetylglucosamine O-acyltransferase of Syntrophobacter fumaroxidans (strain DSM 10017 / MPOB).